The primary structure comprises 457 residues: Argininosuccinate lyase (457 aa).

This sequence belongs to the lyase 1 family. Argininosuccinate lyase subfamily.

The protein resides in the cytoplasm. It catalyses the reaction 2-(N(omega)-L-arginino)succinate = fumarate + L-arginine. It participates in amino-acid biosynthesis; L-arginine biosynthesis; L-arginine from L-ornithine and carbamoyl phosphate: step 3/3. This chain is Argininosuccinate lyase, found in Escherichia fergusonii (strain ATCC 35469 / DSM 13698 / CCUG 18766 / IAM 14443 / JCM 21226 / LMG 7866 / NBRC 102419 / NCTC 12128 / CDC 0568-73).